A 276-amino-acid polypeptide reads, in one-letter code: NADH-cytochrome b5 reductase 2 (276 aa).

In terms of domain architecture, FAD-binding FR-type spans 15-127; that stretch reads EAKYPLPLIE…RGPTGRLFYN (113 aa). Position 17 is an N6-acetyllysine (Lys-17). Tyr-18 carries the post-translational modification Phosphotyrosine. Residues 107–137 and 146–181 each bind FAD; these read ENMK…IKTD and LVHH…RMSL.

The protein belongs to the flavoprotein pyridine nucleotide cytochrome reductase family. Requires FAD as cofactor.

It carries out the reaction 2 Fe(III)-[cytochrome b5] + NADH = 2 Fe(II)-[cytochrome b5] + NAD(+) + H(+). Its function is as follows. NADH-cytochrome b5 reductases are involved in desaturation and elongation of fatty acids, cholesterol biosynthesis, drug metabolism, and, in erythrocyte, methemoglobin reduction. Responsible for NADH-dependent lucigenin chemiluminescence in spermatozoa by reducing both lucigenin and 2-[4-iodophenyl]-3-[4-nitrophenyl]-5-[2,4-disulfophenyl]-2H tetrazolium monosodium salt (WST-1). This is NADH-cytochrome b5 reductase 2 (Cyb5r2) from Rattus norvegicus (Rat).